Reading from the N-terminus, the 515-residue chain is Synaptic vesicular amine transporter (515 aa).

At 1-20 (MALSDLVLLRWLRDSRHSRK) the chain is on the cytoplasmic side. The helical transmembrane segment at 21–41 (LILFIVFLALLLDNMLLTVVV) threads the bilayer. Over 42–130 (PIIPSYLYSI…EDRDLLNENV (89 aa)) the chain is Lumenal, vesicle. Asn56, Asn80, Asn81, Asn89, and Asn111 each carry an N-linked (GlcNAc...) asparagine glycan. Cys118 and Cys325 are joined by a disulfide. Residues 131 to 151 (QVGLLFASKATVQLLTNPFIG) form a helical membrane-spanning segment. At 152-160 (LLTNRIGYP) the chain is on the cytoplasmic side. The helical transmembrane segment at 161–181 (IPMFAGFCIMFISTVMFAFSS) threads the bilayer. The Lumenal, vesicle segment spans residues 182–190 (SYAFLLIAR). The helical transmembrane segment at 191-211 (SLQGIGSSCSSVAGMGMLASV) threads the bilayer. The Cytoplasmic segment spans residues 212-220 (YTDDEERGK). A helical transmembrane segment spans residues 221–243 (PMGIALGGLAMGVLVGPPFGSVL). Serotonin-binding residues include Leu229 and Val233. Over 244 to 249 (YEFVGK) the chain is Lumenal, vesicle. Residues 250 to 272 (TAPFLVLAALVLLDGAIQLFVLQ) form a helical membrane-spanning segment. Topologically, residues 273-292 (PSRVQPESQKGTPLTTLLKD) are cytoplasmic. The chain crosses the membrane as a helical span at residues 293-312 (PYILIAAGSICFANMGIAML). Serotonin is bound by residues Asn306, Ile309, Glu313, Phe335, and Tyr342. Topologically, residues 313 to 329 (EPALPIWMMETMCSRKW) are lumenal, vesicle. The chain crosses the membrane as a helical span at residues 330–353 (QLGVAFLPASISYLIGTNIFGILA). The Cytoplasmic portion of the chain corresponds to 354–358 (HKMGR). Residues 359–379 (WLCALLGMVIVGISILCIPFA) form a helical membrane-spanning segment. Over 380 to 390 (KNIYGLIAPNF) the chain is Lumenal, vesicle. Residues 391 to 411 (GVGFAIGMVDSSMMPIMGYLV) form a helical membrane-spanning segment. Asp400 serves as a coordination point for serotonin. Over 412-415 (DLRH) the chain is Cytoplasmic. Residues 416-436 (VSVYGSVYAIADVAFCMGYAI) traverse the membrane as a helical segment. Residue Tyr434 participates in serotonin binding. Residues 437–441 (GPSAG) are Lumenal, vesicle-facing. Residues 442–463 (GAIAKAIGFPWLMTIIGIIDIA) form a helical membrane-spanning segment. The Cytoplasmic segment spans residues 464 to 515 (FAPLCFFLRSPPAKEEKMAILMDHNCPIKRKMYTQNNVQSYPIGDDEESESD). Phosphoserine; by CK2 occurs at positions 512 and 514.

The protein belongs to the major facilitator superfamily. Vesicular transporter family. In terms of assembly, interacts with SLC6A3. In terms of tissue distribution, expressed in the substantia nigra and the tuberomammillary nucleus of the posterior hypothalamus. Expressed in stomach, in particular in varicose nerve fibers and enterochromaffin-like cells in the corpus region (at protein level).

The protein resides in the cytoplasmic vesicle. It is found in the secretory vesicle. Its subcellular location is the synaptic vesicle membrane. It localises to the secretory vesicle membrane. The protein localises to the cell projection. The protein resides in the axon. It is found in the dendrite. It catalyses the reaction serotonin(in) + 2 H(+)(out) = serotonin(out) + 2 H(+)(in). The enzyme catalyses dopamine(in) + 2 H(+)(out) = dopamine(out) + 2 H(+)(in). The catalysed reaction is histamine(in) + 2 H(+)(out) = histamine(out) + 2 H(+)(in). With respect to regulation, strongly inhibited by reserpine and tetrabenazine. Also inhibited to a lesser extent by ketanserin and fenfluramine. Reserpine and ketanserin inhibit by blocking the substrate-binding pocket. Tetrabenazine traps SLC18A2/VMAT2 in an occluded conformation and its inhibition is specific to SLC18A2/VMAT2 but not SLC18A1/VMAT1. Functionally, electrogenic antiporter that exchanges one cationic monoamine with two intravesicular protons across the membrane of secretory and synaptic vesicles. Uses the electrochemical proton gradient established by the V-type proton-pump ATPase to accumulate high concentrations of monoamines inside the vesicles prior to their release via exocytosis. Transports a variety of catecholamines such as dopamine, adrenaline and noradrenaline, histamine, and indolamines such as serotonin. Regulates the transvesicular monoaminergic gradient that determines the quantal size. Mediates somatodendritic dopamine release in hippocampal neurons, likely as part of a regulated secretory pathway that integrates retrograde synaptic signals. Acts as a primary transporter for striatal dopamine loading ensuring impulse-dependent release of dopamine at the synaptic cleft. Responsible for histamine and serotonin storage and subsequent corelease from mast cell granules. This chain is Synaptic vesicular amine transporter (Slc18a2), found in Rattus norvegicus (Rat).